The chain runs to 188 residues: MSIKSDKWIRRMAEQHGMIEPFEPGQVREADGRKIVSYGTSSYGYDIRCADEFKIFTNINSTIVDPKNFDEKSFVDFKGDVCIIPPNSFALARTMEYFRIPRSVLTICLGKSTYARCGIIVNVTPFEPEWEGYVTLEFSNTTPLPAKIYAGEGCAQVLFFESDEVCETSYADRGGKYQGQHGVTLPKA.

Residues 111 to 116, 135 to 137, Gln-156, Tyr-170, and Gln-180 contribute to the dCTP site; these read KSTYAR and TLE. The Proton donor/acceptor role is filled by Glu-137.

Belongs to the dCTP deaminase family. Homotrimer.

It catalyses the reaction dCTP + H2O + H(+) = dUTP + NH4(+). Its pathway is pyrimidine metabolism; dUMP biosynthesis; dUMP from dCTP (dUTP route): step 1/2. Catalyzes the deamination of dCTP to dUTP. In Cupriavidus pinatubonensis (strain JMP 134 / LMG 1197) (Cupriavidus necator (strain JMP 134)), this protein is dCTP deaminase.